A 394-amino-acid chain; its full sequence is 3-hydroxybenzoate 6-hydroxylase 1 (394 aa).

This sequence belongs to the 3-hydroxybenzoate 6-hydroxylase family. As to quaternary structure, homotrimer. FAD is required as a cofactor.

The catalysed reaction is 3-hydroxybenzoate + NADH + O2 + H(+) = 2,5-dihydroxybenzoate + NAD(+) + H2O. Its activity is regulated as follows. Inhibited by manganese, copper, mercury, and iron ions. Its function is as follows. Catalyzes the NAD- or NADP-dependent conversion of 3-hydroxybenzoate to gentisate. The affinity of the enzyme toward NAD is twice as high as for NADP. The enzyme shows higher specific activities against the intermediates in the degradation of 2,5-xylenol and 3,5-xylenol, 3-hydroxy-4-methylbenzoate and 3-hydroxy-5-methylbenzoate, respectively, than for 3-hydroxybenzoate. It also shows activity against 3-substituted benzoates. This Aquipseudomonas alcaligenes (Pseudomonas alcaligenes) protein is 3-hydroxybenzoate 6-hydroxylase 1 (xlnD).